The following is a 329-amino-acid chain: Cytosolic arginine sensor for mTORC1 subunit 2 (329 aa).

2 ACT domains span residues 72-140 (ADAT…HTLS) and 262-322 (ELWK…SALK).

This sequence belongs to the GATS family. As to quaternary structure, forms homodimers and heterodimers with CASTOR1. Interacts with the GATOR2 complex which is composed of MIOS, SEC13, SEH1L, WDR24 and WDR59; the interaction is not regulated by arginine. As to expression, widely expressed.

It is found in the cytoplasm. Its subcellular location is the cytosol. In terms of biological role, functions as a negative regulator of the TORC1 signaling pathway through the GATOR complex. As part of homodimers or heterodimers with CASTOR1, directly binds and inhibits the GATOR subcomplex GATOR2 and thereby mTORC1. Does not directly bind arginine, but binding of arginine to CASTOR1 disrupts the interaction of CASTOR2-containing heterodimers with GATOR2 which can in turn activate mTORC1 and the TORC1 signaling pathway. The polypeptide is Cytosolic arginine sensor for mTORC1 subunit 2 (Homo sapiens (Human)).